The primary structure comprises 317 residues: MSIKDHLSISSEVRKALAGGRPVVALESTIITHGMPYPQNLEMVRRVEAVVRRNGAVPATIAIMDGKLRVGVKGEDLERLARGGGKAAKASRRDVAALLVLGGMAGTTVATTMMAAAWAGIQVFATGGIGGVHRGAETTFDISADLEELSQTQVAVVCAGAKSILDIPKTLETLETHGVPVLGYKTEDFPAFWARQSGQKVDHRIESAEEAARVIALQFELGMGGVLVANPIPESHAMDARAIEARIEEAIRCAEAEGVSRKDLTPFLLKRIFELTEGKSLIANIALVENNAAVAAEIATAMSELGAKSKSKSKAKA.

The Proton donor role is filled by glutamate 27. The substrate site is built by lysine 89 and valine 109. Mn(2+) is bound at residue aspartate 141. Residue 143-145 (SAD) coordinates substrate. Lysine 162 functions as the Nucleophile in the catalytic mechanism.

This sequence belongs to the pseudouridine-5'-phosphate glycosidase family. Homotrimer. Requires Mn(2+) as cofactor.

It catalyses the reaction D-ribose 5-phosphate + uracil = psi-UMP + H2O. In terms of biological role, catalyzes the reversible cleavage of pseudouridine 5'-phosphate (PsiMP) to ribose 5-phosphate and uracil. Functions biologically in the cleavage direction, as part of a pseudouridine degradation pathway. In Sorangium cellulosum (strain So ce56) (Polyangium cellulosum (strain So ce56)), this protein is Pseudouridine-5'-phosphate glycosidase.